The primary structure comprises 415 residues: Lipoyl synthase, mitochondrial (415 aa).

Residues 1-32 constitute a mitochondrion transit peptide; it reads MAVSTSHFRSLCASSRSLSRTGIVAPISCRGY. The segment at 30-50 is disordered; that stretch reads RGYATTEPSPSATSTTTTTTA. The span at 33 to 49 shows a compositional bias: low complexity; sequence ATTEPSPSATSTTTTTT. Positions 132, 137, 143, 163, 167, 170, and 378 each coordinate [4Fe-4S] cluster. The 222-residue stretch at 146-367 folds into the Radical SAM core domain; the sequence is GSDKSAATAT…RQRALDMGFL (222 aa).

Belongs to the radical SAM superfamily. Lipoyl synthase family. [4Fe-4S] cluster is required as a cofactor.

The protein resides in the mitochondrion. The enzyme catalyses [[Fe-S] cluster scaffold protein carrying a second [4Fe-4S](2+) cluster] + N(6)-octanoyl-L-lysyl-[protein] + 2 oxidized [2Fe-2S]-[ferredoxin] + 2 S-adenosyl-L-methionine + 4 H(+) = [[Fe-S] cluster scaffold protein] + N(6)-[(R)-dihydrolipoyl]-L-lysyl-[protein] + 4 Fe(3+) + 2 hydrogen sulfide + 2 5'-deoxyadenosine + 2 L-methionine + 2 reduced [2Fe-2S]-[ferredoxin]. It participates in protein modification; protein lipoylation via endogenous pathway; protein N(6)-(lipoyl)lysine from octanoyl-[acyl-carrier-protein]: step 2/2. In terms of biological role, catalyzes the radical-mediated insertion of two sulfur atoms into the C-6 and C-8 positions of the octanoyl moiety bound to the lipoyl domains of lipoate-dependent enzymes, thereby converting the octanoylated domains into lipoylated derivatives. The chain is Lipoyl synthase, mitochondrial from Neosartorya fischeri (strain ATCC 1020 / DSM 3700 / CBS 544.65 / FGSC A1164 / JCM 1740 / NRRL 181 / WB 181) (Aspergillus fischerianus).